Here is a 41-residue protein sequence, read N- to C-terminus: Ornatin-A3 (41 aa).

The short motif at Arg33–Asp35 is the Cell attachment site element.

This sequence belongs to the ornatin family.

The protein resides in the secreted. Its function is as follows. Potent inhibitor of fibrinogen interaction with platelet receptors expressed on glycoprotein IIb-IIIa complex. May prevent blood from clotting during either feeding and/or storage of ingested blood. The polypeptide is Ornatin-A3 (Placobdella ornata (Turtle leech)).